A 118-amino-acid polypeptide reads, in one-letter code: Putative pterin-4-alpha-carbinolamine dehydratase (118 aa).

Belongs to the pterin-4-alpha-carbinolamine dehydratase family.

The enzyme catalyses (4aS,6R)-4a-hydroxy-L-erythro-5,6,7,8-tetrahydrobiopterin = (6R)-L-erythro-6,7-dihydrobiopterin + H2O. The protein is Putative pterin-4-alpha-carbinolamine dehydratase of Pseudomonas entomophila (strain L48).